The primary structure comprises 721 residues: BBSome complex member BBS2 (721 aa).

Positions Lys-325–Glu-369 form a coiled coil.

Part of BBSome complex, that contains BBS1, BBS2, BBS4, BBS5, BBS7, BBS8/TTC8, BBS9 and BBIP10. Interacts (via C-terminus) with BBS7. Interacts (via coiled coil domain) with MKKS. Interacts with CCDC28B. Interacts with DLEC1.

The protein localises to the cell projection. Its subcellular location is the cilium membrane. It localises to the cytoplasm. The protein resides in the cytoskeleton. It is found in the microtubule organizing center. The protein localises to the centrosome. Its subcellular location is the centriolar satellite. The BBSome complex is thought to function as a coat complex required for sorting of specific membrane proteins to the primary cilia. The BBSome complex is required for ciliogenesis but is dispensable for centriolar satellite function. This ciliogenic function is mediated in part by the Rab8 GDP/GTP exchange factor, which localizes to the basal body and contacts the BBSome. Rab8(GTP) enters the primary cilium and promotes extension of the ciliary membrane. Firstly the BBSome associates with the ciliary membrane and binds to RAB3IP/Rabin8, the guanosyl exchange factor (GEF) for Rab8 and then the Rab8-GTP localizes to the cilium and promotes docking and fusion of carrier vesicles to the base of the ciliary membrane. The BBSome complex, together with the LTZL1, controls SMO ciliary trafficking and contributes to the sonic hedgehog (SHH) pathway regulation. Required for proper BBSome complex assembly and its ciliary localization. The sequence is that of BBSome complex member BBS2 (Bbs2) from Mus musculus (Mouse).